Here is a 268-residue protein sequence, read N- to C-terminus: Tubulin-specific chaperone C (268 aa).

The C-CAP/cofactor C-like domain occupies 98–255; it reads PAYTTTLKKH…SAFAFEDFDI (158 aa).

The protein localises to the cytoplasm. The protein resides in the cytoskeleton. Its function is as follows. Tubulin-folding protein; involved in the early step of the tubulin folding pathway. The protein is Tubulin-specific chaperone C (CIN2) of Saccharomyces cerevisiae (strain ATCC 204508 / S288c) (Baker's yeast).